The primary structure comprises 446 residues: Probable D-serine dehydratase (446 aa).

Position 116 is an N6-(pyridoxal phosphate)lysine (K116).

Belongs to the serine/threonine dehydratase family. DsdA subfamily. The cofactor is pyridoxal 5'-phosphate.

The enzyme catalyses D-serine = pyruvate + NH4(+). This Bacillus cereus (strain ZK / E33L) protein is Probable D-serine dehydratase.